The chain runs to 375 residues: Putative actin-26 (375 aa).

It belongs to the actin family.

The protein localises to the cytoplasm. Its subcellular location is the cytoskeleton. It catalyses the reaction ATP + H2O = ADP + phosphate + H(+). Actins are highly conserved proteins that are involved in various types of cell motility and are ubiquitously expressed in all eukaryotic cells. Multiple isoforms are involved in various cellular functions such as cytoskeleton structure, cell mobility, chromosome movement and muscle contraction. The sequence is that of Putative actin-26 (act26) from Dictyostelium discoideum (Social amoeba).